The chain runs to 322 residues: Elongation factor P--(R)-beta-lysine ligase (322 aa).

Position 75–77 (75–77) interacts with substrate; it reads SPE. ATP is bound at residue 99-101; the sequence is RNE. Tyr-117 contributes to the substrate binding site. Residue 241-242 participates in ATP binding; sequence EL. Glu-248 is a substrate binding site. An ATP-binding site is contributed by Gly-297.

Belongs to the class-II aminoacyl-tRNA synthetase family. EpmA subfamily. Homodimer.

It carries out the reaction D-beta-lysine + L-lysyl-[protein] + ATP = N(6)-((3R)-3,6-diaminohexanoyl)-L-lysyl-[protein] + AMP + diphosphate + H(+). Its function is as follows. With EpmB is involved in the beta-lysylation step of the post-translational modification of translation elongation factor P (EF-P). Catalyzes the ATP-dependent activation of (R)-beta-lysine produced by EpmB, forming a lysyl-adenylate, from which the beta-lysyl moiety is then transferred to the epsilon-amino group of a conserved specific lysine residue in EF-P. The chain is Elongation factor P--(R)-beta-lysine ligase from Avibacterium paragallinarum (Haemophilus gallinarum).